The following is an 856-amino-acid chain: Inactive rhomboid protein 1 (856 aa).

Residues Met1–Leu20 form a disordered region. Over Met1–Thr412 the chain is Cytoplasmic. Ser76 and Ser176 each carry phosphoserine. Thr180 and Thr183 each carry phosphothreonine. The residue at position 391 (Ser391) is a Phosphoserine. A helical transmembrane segment spans residues Phe413 to Phe433. Residues Ser434–Arg656 lie on the Lumenal side of the membrane. Asn584 carries an N-linked (GlcNAc...) asparagine glycan. Residues Leu657–Gln677 traverse the membrane as a helical segment. The Cytoplasmic segment spans residues Met678–Arg692. Residues Ile693–Pro713 form a helical membrane-spanning segment. Topologically, residues Tyr714–Arg715 are lumenal. Residues Ala716–Phe736 form a helical membrane-spanning segment. Residues Gln737 to Arg747 are Cytoplasmic-facing. Residues Ala748–Ile768 traverse the membrane as a helical segment. Residues Asp769–His773 are Lumenal-facing. Residues Ile774–Gly794 traverse the membrane as a helical segment. Residues Lys795–Gln804 lie on the Cytoplasmic side of the membrane. Residues Ile805–Phe825 form a helical membrane-spanning segment. At Tyr826 to His856 the chain is on the lumenal side.

This sequence belongs to the peptidase S54 family. Homodimer, or homooligomer. Interacts with TGFA and HBEGF. Interacts with EGF; may retain EGF in the endoplasmic reticulum and regulates its degradation through the endoplasmic reticulum-associated degradation (ERAD). Interacts (via cytoplasmic N-terminus) with FRMD8/iTAP; this interaction leads to mutual protein stabilization. Interacts with ADAM17/TACE.

It localises to the endoplasmic reticulum membrane. It is found in the golgi apparatus membrane. Functionally, regulates ADAM17 protease, a sheddase of the epidermal growth factor (EGF) receptor ligands and TNF, thereby plays a role in sleep, cell survival, proliferation, migration and inflammation. Does not exhibit any protease activity on its own. This is Inactive rhomboid protein 1 (Rhbdf1) from Rattus norvegicus (Rat).